A 2219-amino-acid polypeptide reads, in one-letter code: E3 ubiquitin-protein ligase Ubr3 (2219 aa).

Disordered stretches follow at residues 1–48 and 78–134; these read MDED…DLSS and AAGA…SALS. The span at 20–29 shows a compositional bias: basic and acidic residues; sequence VREQTHHPPM. Residues 31-42 are compositionally biased toward acidic residues; sequence EDQELDNEDGSS. A compositionally biased stretch (low complexity) spans 114–134; sequence GPTTTTSSGTAAESGAASALS. A UBR-type zinc finger spans residues 222–293; it reads AKCGLVWVPH…AEGFCSDHGI (72 aa). Disordered stretches follow at residues 1348-1367 and 1440-1464; these read SFSL…TMDV and QREK…KARE. Acidic residues predominate over residues 1353–1367; that stretch reads DGEDQSSDDDSTMDV. The RING-type; degenerate zinc-finger motif lies at 1607 to 1643; it reads CGHHVHLSCLEAYLKTLYTTQRQPVQDRGEFYCPVCR. 2 disordered regions span residues 1872-1902 and 1935-1954; these read VGSD…QQQQ and SAAA…HGAS. Residues 1877–1888 show a composition bias toward low complexity; it reads SAAESQQQESAA.

Belongs to the E3 ubiquitin-protein ligase UBR1-like family. As to quaternary structure, selectively interacts (via UBR-type zinc finger) with the cleaved form of Diap1; this interaction is enhanced by tal. Interacts with tal and Rrp1. Interacts with ovo isoform B (via N-terminus). Interacts with Cad99C (via the cytoplasmic domain). Interacts with ck and Sans. Interacts with cos (via Kinesin motor domain). In vitro, self-ubiquitination in the presence of E1, E2 and ubiquitin.

The protein localises to the cytoplasm. It is found in the nucleus. The catalysed reaction is S-ubiquitinyl-[E2 ubiquitin-conjugating enzyme]-L-cysteine + [acceptor protein]-L-lysine = [E2 ubiquitin-conjugating enzyme]-L-cysteine + N(6)-ubiquitinyl-[acceptor protein]-L-lysine.. It functions in the pathway protein modification; protein ubiquitination. E3 ubiquitin-protein ligase which is a component of the N-end rule pathway. Recognizes and binds to proteins bearing specific N-terminal residues, leading to their ubiquitination and subsequent degradation. Binds to the E3 ubiquitin-protein ligase Diap1 and enhances its ubiquitination and anti-apoptotic functions. Essential during trichome development for the ubiquitination of the N-terminus of ovo isoform B (svb), converting it from a transcriptional inhibitor to an activator. Positively regulates a hh-signaling pathway which functions in photoreceptor differentiation. Activation of hh up-regulates transcription of Ubr3, which in turn promotes hh signaling by mediating the ubiquitination and degradation of cos. Necessary for auditory transduction: plays a role in Johnston's organ organization by acting in the regulation of zip and ck function in scolopidial apical attachment. Likely to function by acting in a pathway that negatively regulates the ubiquitination of zip, consequently affecting its interaction with ck. May also negatively regulate a component of the SCF (SKP1-CUL1-F-box protein) E3 ubiquitin-protein ligase complex Cul1, which also appears to function in the negative regulation of the zip-ck interaction and scolopidial apical attachment. The chain is E3 ubiquitin-protein ligase Ubr3 from Drosophila melanogaster (Fruit fly).